The sequence spans 685 residues: Small ribosomal subunit protein mS39 (685 aa).

A mitochondrion-targeting transit peptide spans 1–10; sequence MAAAAVAARR. An N6-acetyllysine modification is found at K127. 10 PPR repeats span residues 150–184, 185–220, 254–288, 289–329, 330–366, 367–407, 412–446, 454–488, 489–523, and 572–606; these read IEDVSEAALEERIRLRKVRASVDMFDQLLQAGTTV, SLETTNSLLDLLCYYGDQEPPADYPFQQTEHLENLE, NARSYCTMIRGMVKHRAYAQALNVYTELLNNRLSA, DVYT…KVKP, NLQTFNTILKGLRKCYSLGRIPALQILREMKHIGIEP, SLAT…TFSP, DGRFFQLAMSVCSSLRDLELAYQVHRLLNTGDNRK, RKVYYSKFFSLICSLEQIDVTLKWYKDLIPSVFLP, HYQIFIGLLQALDVANRLELVPQIWKDSKEYSHTF, and PANPLQYIAVLFLRGGRSQEAWKMLELFKKHKKIP. The segment at 663–685 is disordered; that stretch reads LGNLTELNSSDGESSSDSDSDDK. Positions 676–685 are enriched in acidic residues; it reads SSSDSDSDDK.

It belongs to the mitochondrion-specific ribosomal protein mS39 family. As to quaternary structure, component of the mitochondrial ribosome small subunit (28S) which comprises a 12S rRNA and about 30 distinct proteins. Associated with the 12S mitochondrial rRNA (12S mt-rRNA).

It localises to the mitochondrion. Mitochondrial RNA-binding protein that has a role in mitochondrial translation. In Mus musculus (Mouse), this protein is Small ribosomal subunit protein mS39 (Ptcd3).